Here is a 370-residue protein sequence, read N- to C-terminus: tRNA-specific 2-thiouridylase MnmA (370 aa).

ATP is bound by residues 20–27 and Met46; that span reads GMSGGVDS. The interaction with target base in tRNA stretch occupies residues 106–108; the sequence is NPD. Cys111 acts as the Nucleophile in catalysis. An intrachain disulfide couples Cys111 to Cys207. Position 135 (Gly135) interacts with ATP. The tract at residues 157-159 is interaction with tRNA; sequence KDQ. The active-site Cysteine persulfide intermediate is the Cys207. The segment at 318–319 is interaction with tRNA; sequence RY.

Belongs to the MnmA/TRMU family.

Its subcellular location is the cytoplasm. It carries out the reaction S-sulfanyl-L-cysteinyl-[protein] + uridine(34) in tRNA + AH2 + ATP = 2-thiouridine(34) in tRNA + L-cysteinyl-[protein] + A + AMP + diphosphate + H(+). In terms of biological role, catalyzes the 2-thiolation of uridine at the wobble position (U34) of tRNA, leading to the formation of s(2)U34. In Polynucleobacter asymbioticus (strain DSM 18221 / CIP 109841 / QLW-P1DMWA-1) (Polynucleobacter necessarius subsp. asymbioticus), this protein is tRNA-specific 2-thiouridylase MnmA.